Here is a 980-residue protein sequence, read N- to C-terminus: Valine--tRNA ligase (980 aa).

Residues 1–40 (MADKGCEAAQSKDSSAPGSGEPRPKTEKELERERQKAAKL) are disordered. Residues 22-40 (PRPKTEKELERERQKAAKL) are compositionally biased toward basic and acidic residues. A 'HIGH' region motif is present at residues 139 to 149 (PNVTGALHIGH). The 'KMSKS' region signature appears at 652–656 (KMSKS). K655 contacts ATP.

The protein belongs to the class-I aminoacyl-tRNA synthetase family.

It is found in the cytoplasm. It carries out the reaction tRNA(Val) + L-valine + ATP = L-valyl-tRNA(Val) + AMP + diphosphate. The polypeptide is Valine--tRNA ligase (vas2) (Schizosaccharomyces pombe (strain 972 / ATCC 24843) (Fission yeast)).